We begin with the raw amino-acid sequence, 177 residues long: Large ribosomal subunit protein uL6 (177 aa).

The protein belongs to the universal ribosomal protein uL6 family. As to quaternary structure, part of the 50S ribosomal subunit.

In terms of biological role, this protein binds to the 23S rRNA, and is important in its secondary structure. It is located near the subunit interface in the base of the L7/L12 stalk, and near the tRNA binding site of the peptidyltransferase center. This chain is Large ribosomal subunit protein uL6, found in Pectobacterium atrosepticum (strain SCRI 1043 / ATCC BAA-672) (Erwinia carotovora subsp. atroseptica).